Reading from the N-terminus, the 418-residue chain is Voltage-gated ClC-type chloride channel ClcB (418 aa).

Residue methionine 1 is a topological domain, cytoplasmic. A helical membrane pass occupies residues phenylalanine 2–phenylalanine 22. Over arginine 23 to arginine 53 the chain is Periplasmic. Residues leucine 54–phenylalanine 74 form a helical membrane-spanning segment. Residues threonine 75–lysine 145 lie on the Cytoplasmic side of the membrane. Residues leucine 146–glycine 166 traverse the membrane as a helical segment. The Periplasmic segment spans residues serine 167–threonine 177. A helical transmembrane segment spans residues methionine 178–isoleucine 200. Topologically, residues asparagine 201–tyrosine 221 are cytoplasmic. A helical membrane pass occupies residues alanine 222–methionine 242. Residues asparagine 243–proline 257 lie on the Periplasmic side of the membrane. A helical transmembrane segment spans residues tryptophan 258 to tryptophan 278. The Cytoplasmic segment spans residues glycine 279–threonine 290. Residues alanine 291–alanine 311 traverse the membrane as a helical segment. Topologically, residues serine 312–serine 315 are periplasmic. Residues glycine 316–tyrosine 336 form a helical membrane-spanning segment. Topologically, residues glycine 337–threonine 351 are cytoplasmic. Residues leucine 352–methionine 372 traverse the membrane as a helical segment. Topologically, residues serine 373 to glutamate 379 are periplasmic. A helical membrane pass occupies residues methionine 380 to isoleucine 400. Topologically, residues serine 401–serine 418 are cytoplasmic.

Belongs to the chloride channel (TC 2.A.49) family. ClcB subfamily.

Its subcellular location is the cell inner membrane. In terms of biological role, probably acts as an electrical shunt for an outwardly-directed proton pump that is linked to amino acid decarboxylation, as part of the extreme acid resistance (XAR) response. This Escherichia coli (strain K12) protein is Voltage-gated ClC-type chloride channel ClcB (clcB).